Here is a 111-residue protein sequence, read N- to C-terminus: uncharacterized protein (111 aa).

This is an uncharacterized protein from Saccharolobus solfataricus (strain ATCC 35092 / DSM 1617 / JCM 11322 / P2) (Sulfolobus solfataricus).